The chain runs to 160 residues: Lipoprotein signal peptidase (160 aa).

A run of 4 helical transmembrane segments spans residues 7 to 27 (WFWL…YITV), 39 to 59 (LWPG…FSFF), 62 to 82 (GAVW…FLGW), and 96 to 116 (GFIL…GYVV). Active-site residues include Asp117 and Asp133. A helical transmembrane segment spans residues 126 to 146 (FPVFNLADTFINIGIFFLLLA).

It belongs to the peptidase A8 family.

The protein resides in the cell inner membrane. It carries out the reaction Release of signal peptides from bacterial membrane prolipoproteins. Hydrolyzes -Xaa-Yaa-Zaa-|-(S,diacylglyceryl)Cys-, in which Xaa is hydrophobic (preferably Leu), and Yaa (Ala or Ser) and Zaa (Gly or Ala) have small, neutral side chains.. It participates in protein modification; lipoprotein biosynthesis (signal peptide cleavage). Its function is as follows. This protein specifically catalyzes the removal of signal peptides from prolipoproteins. This chain is Lipoprotein signal peptidase, found in Gloeothece citriformis (strain PCC 7424) (Cyanothece sp. (strain PCC 7424)).